Here is a 177-residue protein sequence, read N- to C-terminus: MNARENAIVQKYALSFVEKVSDHADIWDMYDQISDLISIIHDSKLNRILLSATVSREEKADFVRTVRQSSFWQINDLIEDVIRDGHADLLLETLERVQLQISKFKNEFEARVVSVYPLTEAQKERLRHLVEQRFSLRVRNITEELDQSLLGGFIVTVNHKVIDASVRTQLKDIRKKL.

This sequence belongs to the ATPase delta chain family. As to quaternary structure, F-type ATPases have 2 components, F(1) - the catalytic core - and F(0) - the membrane proton channel. F(1) has five subunits: alpha(3), beta(3), gamma(1), delta(1), epsilon(1). F(0) has three main subunits: a(1), b(2) and c(10-14). The alpha and beta chains form an alternating ring which encloses part of the gamma chain. F(1) is attached to F(0) by a central stalk formed by the gamma and epsilon chains, while a peripheral stalk is formed by the delta and b chains.

It localises to the cell membrane. Functionally, f(1)F(0) ATP synthase produces ATP from ADP in the presence of a proton or sodium gradient. F-type ATPases consist of two structural domains, F(1) containing the extramembraneous catalytic core and F(0) containing the membrane proton channel, linked together by a central stalk and a peripheral stalk. During catalysis, ATP synthesis in the catalytic domain of F(1) is coupled via a rotary mechanism of the central stalk subunits to proton translocation. Its function is as follows. This protein is part of the stalk that links CF(0) to CF(1). It either transmits conformational changes from CF(0) to CF(1) or is implicated in proton conduction. The sequence is that of ATP synthase subunit delta from Streptococcus suis (strain 98HAH33).